Here is a 461-residue protein sequence, read N- to C-terminus: Cytochrome c biogenesis protein CcsB (461 aa).

The next 3 helical transmembrane spans lie at 32–52, 91–111, and 178–198; these read LRLAIALLLIIALFSISGTVI, TWWFLSLLVLFGTSLTACTFT, and IGPIIVHIGIVTILLGSIWGA.

The protein belongs to the Ccs1/CcsB family. In terms of assembly, may interact with CcsA.

It localises to the cellular thylakoid membrane. Its function is as follows. Required during biogenesis of c-type cytochromes (cytochrome c6 and cytochrome f) at the step of heme attachment. The protein is Cytochrome c biogenesis protein CcsB of Trichormus variabilis (strain ATCC 29413 / PCC 7937) (Anabaena variabilis).